Reading from the N-terminus, the 112-residue chain is ATP-dependent Clp protease adapter protein ClpS (112 aa).

It belongs to the ClpS family. In terms of assembly, binds to the N-terminal domain of the chaperone ClpA.

Involved in the modulation of the specificity of the ClpAP-mediated ATP-dependent protein degradation. This chain is ATP-dependent Clp protease adapter protein ClpS, found in Rhodococcus jostii (strain RHA1).